A 436-amino-acid chain; its full sequence is Adenylosuccinate synthetase (436 aa).

GTP is bound by residues 12-18 (GDEGKGK) and 40-42 (GHT). Catalysis depends on aspartate 13, which acts as the Proton acceptor. Mg(2+)-binding residues include aspartate 13 and glycine 40. Residues 13-16 (DEGK), 38-41 (NAGH), threonine 130, arginine 144, glutamine 230, threonine 245, and arginine 309 each bind IMP. The active-site Proton donor is histidine 41. 305-311 (TTTGRPR) contributes to the substrate binding site. GTP is bound by residues arginine 311, 337-339 (KLD), and 419-421 (SVG).

The protein belongs to the adenylosuccinate synthetase family. As to quaternary structure, homodimer. Requires Mg(2+) as cofactor.

The protein localises to the cytoplasm. The enzyme catalyses IMP + L-aspartate + GTP = N(6)-(1,2-dicarboxyethyl)-AMP + GDP + phosphate + 2 H(+). The protein operates within purine metabolism; AMP biosynthesis via de novo pathway; AMP from IMP: step 1/2. Plays an important role in the de novo pathway of purine nucleotide biosynthesis. Catalyzes the first committed step in the biosynthesis of AMP from IMP. The chain is Adenylosuccinate synthetase from Myxococcus xanthus (strain DK1622).